The primary structure comprises 331 residues: Glyceraldehyde-3-phosphate dehydrogenase (331 aa).

NAD(+) contacts are provided by residues 10-11 (RI), Asp-31, Lys-75, and Thr-117. Residues 148–150 (SCT) and Thr-179 contribute to the D-glyceraldehyde 3-phosphate site. The active-site Nucleophile is Cys-149. Asn-180 lines the NAD(+) pocket. D-glyceraldehyde 3-phosphate-binding positions include Arg-194, 207–208 (TG), and Arg-230. Asn-311 contacts NAD(+).

Belongs to the glyceraldehyde-3-phosphate dehydrogenase family. Homotetramer.

The protein resides in the cytoplasm. The catalysed reaction is D-glyceraldehyde 3-phosphate + phosphate + NAD(+) = (2R)-3-phospho-glyceroyl phosphate + NADH + H(+). Its pathway is carbohydrate degradation; glycolysis; pyruvate from D-glyceraldehyde 3-phosphate: step 1/5. Its function is as follows. Catalyzes the oxidative phosphorylation of glyceraldehyde 3-phosphate (G3P) to 1,3-bisphosphoglycerate (BPG) using the cofactor NAD. The first reaction step involves the formation of a hemiacetal intermediate between G3P and a cysteine residue, and this hemiacetal intermediate is then oxidized to a thioester, with concomitant reduction of NAD to NADH. The reduced NADH is then exchanged with the second NAD, and the thioester is attacked by a nucleophilic inorganic phosphate to produce BPG. This is Glyceraldehyde-3-phosphate dehydrogenase (gap) from Thermus aquaticus.